Consider the following 404-residue polypeptide: UPF0674 endoplasmic reticulum membrane protein YNR021W (404 aa).

An N-acetylserine modification is found at Ser2. An N-linked (GlcNAc...) asparagine glycan is attached at Asn44. The chain crosses the membrane as a helical span at residues 49-68 (LCALGVLFLVYAFYKFGNSV). Asn98 is a glycosylation site (N-linked (GlcNAc...) asparagine). The tract at residues 369–404 (AKRRQLKASGQQEKVDQKMKEKRERRLKNKQRTRFQ) is disordered. A compositionally biased stretch (basic and acidic residues) spans 381–392 (EKVDQKMKEKRE). Residues 393-404 (RRLKNKQRTRFQ) show a composition bias toward basic residues.

Belongs to the UPF0674 family.

It localises to the endoplasmic reticulum membrane. This is UPF0674 endoplasmic reticulum membrane protein YNR021W from Saccharomyces cerevisiae (strain ATCC 204508 / S288c) (Baker's yeast).